The following is a 945-amino-acid chain: Soluble guanylate cyclase gcy-33 (945 aa).

Residue histidine 104 participates in heme binding. The stretch at 388–413 (SEVLTEMTREISEAKKTARTLLTQMM) forms a coiled coil. One can recognise a Guanylate cyclase domain in the interval 437 to 567 (SIGFIRVCDF…DTVNTASRME (131 aa)). Disordered stretches follow at residues 639–679 (KEAE…LSGS) and 706–930 (QDEN…KCED). Low complexity predominate over residues 661 to 679 (SLGESIDSSSSRRGSLSGS). Polar residues predominate over residues 711–720 (RPPTWSASHS). Basic and acidic residues predominate over residues 721–731 (QDIRKPRKTES). Polar residues predominate over residues 732 to 744 (KITLNSRLSSSDL). Composition is skewed to basic and acidic residues over residues 750–759 (ETSKDSDGET) and 766–804 (ELKE…DHVS). The stretch at 763–802 (TSSELKEVNRIREEALAQEKEEERTTKEENQKIEEVGEDH) forms a coiled coil. Polar residues predominate over residues 817–828 (GDNNISFSQMPS). The segment covering 851–861 (ISKKKLEKEDS) has biased composition (basic and acidic residues). The segment covering 862 to 884 (NSSMSSLDERTTVSAKPTTTRRL) has biased composition (polar residues). The segment covering 886-896 (NQKDLEKEKKR) has biased composition (basic and acidic residues). The segment covering 898–911 (SMAGSSVTSSSAHS) has biased composition (low complexity). Residues 916–930 (SKKDTRDKSRCKCED) are compositionally biased toward basic and acidic residues.

This sequence belongs to the adenylyl cyclase class-4/guanylyl cyclase family. Heterodimer; with other soluble guanylate cyclases. The cofactor is heme. Expressed in BAG sensory neuron.

Its subcellular location is the cytoplasm. It carries out the reaction GTP = 3',5'-cyclic GMP + diphosphate. May be regulated by molecular oxygen. Probably not activated by nitric oxide (NO). Synthesizes cyclic GMP (cGMP) from GTP. May be involved in sensitivity to quinine by regulating egl-4 activity through the production of cGMP. The chain is Soluble guanylate cyclase gcy-33 (gcy-33) from Caenorhabditis elegans.